The sequence spans 119 residues: Large ribosomal subunit protein bL20 (119 aa).

The protein belongs to the bacterial ribosomal protein bL20 family.

In terms of biological role, binds directly to 23S ribosomal RNA and is necessary for the in vitro assembly process of the 50S ribosomal subunit. It is not involved in the protein synthesizing functions of that subunit. This Delftia acidovorans (strain DSM 14801 / SPH-1) protein is Large ribosomal subunit protein bL20.